The sequence spans 794 residues: EVI5-like protein (794 aa).

Over residues 1-30 (MASPTLSPDSSSQEALSAPTCSPTSDSENL) the composition is skewed to polar residues. Disordered stretches follow at residues 1-36 (MASP…DELE) and 49-75 (EADS…SSSA). Over residues 55 to 75 (MRSMNGSRRNSGSSLVSSSSA) the composition is skewed to low complexity. The Rab-GAP TBC domain occupies 115–300 (GIPHHFRAIV…RVFDIFMYEG (186 aa)). Coiled-coil stretches lie at residues 358–449 (KKMK…QQEN) and 569–709 (EAQA…LKGP). Ser685 is subject to Phosphoserine. The disordered stretch occupies residues 766–794 (LERPAKDSEGSSDSDADELAAPYSQGLDN).

May interact with RAB10.

In terms of biological role, functions as a GTPase-activating protein (GAP) with a broad specificity. The chain is EVI5-like protein (EVI5L) from Homo sapiens (Human).